The chain runs to 516 residues: Coiled-coil domain-containing protein 149 (516 aa).

Basic and acidic residues predominate over residues methionine 1 to glutamate 18. The segment at methionine 1–glutamate 29 is disordered. Coiled-coil stretches lie at residues methionine 1–lysine 195 and isoleucine 259–serine 286. Over residues proline 321–glycine 332 the composition is skewed to basic and acidic residues. 2 disordered regions span residues proline 321 to glutamate 350 and glutamate 406 to aspartate 452. The segment covering aspartate 414 to glutamate 436 has biased composition (polar residues).

This sequence belongs to the CCDC149 family.

The polypeptide is Coiled-coil domain-containing protein 149 (ccdc149) (Xenopus laevis (African clawed frog)).